A 423-amino-acid chain; its full sequence is Subtilisin-like protease 2 (423 aa).

The signal sequence occupies residues 1–17 (MQLLNLGLLLLLPFVAG). The propeptide occupies 18-123 (EIAPQPEPLR…VHPDQHVYLA (106 aa)). Residues 37 to 123 (QYIVTLKEGL…VHPDQHVYLA (87 aa)) enclose the Inhibitor I9 domain. A Peptidase S8 domain is found at 132-423 (RWGLGYMSSK…RKFTLPKNTK (292 aa)). Catalysis depends on charge relay system residues Asp-170 and His-202. Residues Asn-249, Asn-262, and Asn-349 are each glycosylated (N-linked (GlcNAc...) asparagine). The Charge relay system role is filled by Ser-358. Asn-389 carries N-linked (GlcNAc...) asparagine glycosylation.

It belongs to the peptidase S8 family.

It localises to the secreted. In terms of biological role, secreted subtilisin-like serine protease with keratinolytic activity that contributes to pathogenicity. The protein is Subtilisin-like protease 2 (SUB2) of Arthroderma otae (strain ATCC MYA-4605 / CBS 113480) (Microsporum canis).